The primary structure comprises 1456 residues: DNA polymerase gamma, mitochondrial (1456 aa).

The N-terminal 41 residues, M1 to D41, are a transit peptide targeting the mitochondrion. Disordered stretches follow at residues A1200–D1266 and A1308–P1443. A compositionally biased stretch (low complexity) spans A1204–V1239. Residues P1315–A1325 are compositionally biased toward pro residues. Composition is skewed to low complexity over residues P1346–P1371 and T1411–T1428.

This sequence belongs to the DNA polymerase type-A family. Mg(2+) is required as a cofactor.

Its subcellular location is the mitochondrion. The catalysed reaction is DNA(n) + a 2'-deoxyribonucleoside 5'-triphosphate = DNA(n+1) + diphosphate. Its function is as follows. Involved in the replication of mitochondrial DNA. In Neurospora crassa (strain ATCC 24698 / 74-OR23-1A / CBS 708.71 / DSM 1257 / FGSC 987), this protein is DNA polymerase gamma, mitochondrial (mip-1).